A 319-amino-acid chain; its full sequence is Acetyl-coenzyme A carboxylase carboxyl transferase subunit alpha (319 aa).

Positions 36–293 constitute a CoA carboxyltransferase C-terminal domain; it reads EVERLKTKLE…HDAFLSELDR (258 aa).

The protein belongs to the AccA family. In terms of assembly, acetyl-CoA carboxylase is a heterohexamer composed of biotin carboxyl carrier protein (AccB), biotin carboxylase (AccC) and two subunits each of ACCase subunit alpha (AccA) and ACCase subunit beta (AccD).

It is found in the cytoplasm. It carries out the reaction N(6)-carboxybiotinyl-L-lysyl-[protein] + acetyl-CoA = N(6)-biotinyl-L-lysyl-[protein] + malonyl-CoA. The protein operates within lipid metabolism; malonyl-CoA biosynthesis; malonyl-CoA from acetyl-CoA: step 1/1. Component of the acetyl coenzyme A carboxylase (ACC) complex. First, biotin carboxylase catalyzes the carboxylation of biotin on its carrier protein (BCCP) and then the CO(2) group is transferred by the carboxyltransferase to acetyl-CoA to form malonyl-CoA. The polypeptide is Acetyl-coenzyme A carboxylase carboxyl transferase subunit alpha (Dichelobacter nodosus (strain VCS1703A)).